The primary structure comprises 852 residues: Homeobox-leucine zipper protein ATHB-14 (852 aa).

A disordered region spans residues 1-25 (MMMVHSMSRDMMNRESPDKGLDSGK). Positions 7–22 (MSRDMMNRESPDKGLD) are enriched in basic and acidic residues. Positions 22–85 (DSGKYVRYTP…NRRCREKQRK (64 aa)) form a DNA-binding region, homeobox. Positions 80–122 (REKQRKEAARLQTVNRKLNAMNKLLMEENDRLQKQVSNLVYEN) form a coiled coil. The interval 80 to 130 (REKQRKEAARLQTVNRKLNAMNKLLMEENDRLQKQVSNLVYENGHMKHQLH) is ZIP domain. The segment covering 130–148 (HTASGTTTDNSCESVVVSG) has biased composition (polar residues). Residues 130–166 (HTASGTTTDNSCESVVVSGQQHQQQNPNPQHQQRDAN) form a disordered region. Low complexity predominate over residues 149–160 (QQHQQQNPNPQH). An START domain is found at 164-392 (DANNPAGLLS…IAQETSGEVQ (229 aa)).

Belongs to the HD-ZIP homeobox family. Class III subfamily. As to quaternary structure, homodimer. Heterodimer with ZPR3. Interacts with ESR1 and ESR2. Interacts with ZPR3. In terms of tissue distribution, expressed in the center of the meristem and on the adaxial side of the leaves.

The protein resides in the nucleus. Inhibited by ZPR3. Probable transcription factor involved in the determination of adaxial-abaxial polarity in ovule primordium. Specifies adaxial leaf fates. The chain is Homeobox-leucine zipper protein ATHB-14 (ATHB-14) from Arabidopsis thaliana (Mouse-ear cress).